The sequence spans 267 residues: Kallikrein-14 (267 aa).

Residues 1–34 (MSLRVLGSGTWPSAPKMFLLLTALQVLAIAMTQS) form the signal peptide. Positions 35–40 (QEDENK) are cleaved as a propeptide — activation peptide. Positions 41–265 (IIGGHTCTRS…YRSWIEETMR (225 aa)) constitute a Peptidase S1 domain. 5 disulfides stabilise this stretch: cysteine 47–cysteine 180, cysteine 68–cysteine 84, cysteine 159–cysteine 226, cysteine 191–cysteine 205, and cysteine 216–cysteine 241. Residues histidine 83 and aspartate 127 each act as charge relay system in the active site. The active-site Charge relay system is the serine 220.

It belongs to the peptidase S1 family. Kallikrein subfamily. Post-translationally, proteolytic cleavage of the activation peptide produces the active enzyme. Highly expressed in CNS, bone marrow and fetal liver. Also expressed in breast, thyroid, kidney, colon, pancreas, spleen, prostate, uterus, small intestine, placenta and skeletal muscle. Among 40 tissues tested, the highest expression is detected in skin followed by breast and prostate (at protein level). Expressed in stratum corneum by sweat ducts and sweat glands and detected in sweat (at protein level).

The protein resides in the secreted. Its subcellular location is the extracellular space. Its activity is regulated as follows. Inhibited by SERPINA1, SERPINC1, SERPINE1, SERPINF2, aprotinin, soybean, trypsin inhibitor and leupeptin. Inhibited by serine protease inhibitor SPINK5. Has an autoproteolytic activity which may have a regulatory effect. Activated by citrate and inhibited by zinc and to a lower extent by manganese. In terms of biological role, serine-type endopeptidase with a dual trypsin-like and chymotrypsin-like substrate specificity. May activate/inactivate the proteinase-activated receptors F2R, F2RL1 and F2RL3 and other kallikreins including KLK1, KLK3, KLK5 and KLK11. May function in seminal clot liquefaction through direct cleavage of the semenogelin SEMG1 and SEMG2 and activation of KLK3. May function through desmoglein DSG1 cleavage in epidermal desquamation a process by which the most superficial corneocytes are shed from the skin surface. May be involved in several aspects of tumor progression including growth, invasion and angiogenesis. The sequence is that of Kallikrein-14 (KLK14) from Homo sapiens (Human).